A 305-amino-acid polypeptide reads, in one-letter code: UDP-N-acetylenolpyruvoylglucosamine reductase 2 (305 aa).

The FAD-binding PCMH-type domain maps to Val33–Gly197. Arg176 is a catalytic residue. The Proton donor role is filled by Ser226. Residue Glu296 is part of the active site.

The protein belongs to the MurB family. It depends on FAD as a cofactor.

Its subcellular location is the cytoplasm. The enzyme catalyses UDP-N-acetyl-alpha-D-muramate + NADP(+) = UDP-N-acetyl-3-O-(1-carboxyvinyl)-alpha-D-glucosamine + NADPH + H(+). The protein operates within cell wall biogenesis; peptidoglycan biosynthesis. In terms of biological role, cell wall formation. The polypeptide is UDP-N-acetylenolpyruvoylglucosamine reductase 2 (Bacillus cereus (strain ZK / E33L)).